The chain runs to 416 residues: Glutamyl-tRNA reductase (416 aa).

Substrate-binding positions include 49 to 52, Ser105, 110 to 112, and Gln116; these read TCNR and EPQ. Cys50 acts as the Nucleophile in catalysis. NADP(+) is bound at residue 185-190; sequence GAGETI.

The protein belongs to the glutamyl-tRNA reductase family. In terms of assembly, homodimer.

It carries out the reaction (S)-4-amino-5-oxopentanoate + tRNA(Glu) + NADP(+) = L-glutamyl-tRNA(Glu) + NADPH + H(+). It functions in the pathway porphyrin-containing compound metabolism; protoporphyrin-IX biosynthesis; 5-aminolevulinate from L-glutamyl-tRNA(Glu): step 1/2. In terms of biological role, catalyzes the NADPH-dependent reduction of glutamyl-tRNA(Glu) to glutamate 1-semialdehyde (GSA). The protein is Glutamyl-tRNA reductase of Shewanella pealeana (strain ATCC 700345 / ANG-SQ1).